Here is a 345-residue protein sequence, read N- to C-terminus: Biotin synthase (345 aa).

Positions 66–293 (NTVQLSTLLS…RAMVRLSAGR (228 aa)) constitute a Radical SAM core domain. Residues cysteine 81, cysteine 85, and cysteine 88 each contribute to the [4Fe-4S] cluster site. Cysteine 125, cysteine 156, cysteine 216, and arginine 288 together coordinate [2Fe-2S] cluster.

This sequence belongs to the radical SAM superfamily. Biotin synthase family. In terms of assembly, homodimer. The cofactor is [4Fe-4S] cluster. Requires [2Fe-2S] cluster as cofactor.

It carries out the reaction (4R,5S)-dethiobiotin + (sulfur carrier)-SH + 2 reduced [2Fe-2S]-[ferredoxin] + 2 S-adenosyl-L-methionine = (sulfur carrier)-H + biotin + 2 5'-deoxyadenosine + 2 L-methionine + 2 oxidized [2Fe-2S]-[ferredoxin]. The protein operates within cofactor biosynthesis; biotin biosynthesis; biotin from 7,8-diaminononanoate: step 2/2. Catalyzes the conversion of dethiobiotin (DTB) to biotin by the insertion of a sulfur atom into dethiobiotin via a radical-based mechanism. The polypeptide is Biotin synthase (Cupriavidus metallidurans (strain ATCC 43123 / DSM 2839 / NBRC 102507 / CH34) (Ralstonia metallidurans)).